We begin with the raw amino-acid sequence, 118 residues long: Class II hydrophobin CRP (118 aa).

The N-terminal stretch at 1–22 (MQFSIIAISFLASLAMASPAKR) is a signal peptide. The tract at residues 20-46 (AKRGGGGGGSGSGSGSGSGSGSGGGST) is disordered. Over residues 22 to 45 (RGGGGGGSGSGSGSGSGSGSGGGS) the composition is skewed to gly residues. 7 consecutive repeat copies span residues 29–30 (SG), 31–32 (SG), 33–34 (SG), 35–36 (SG), 37–38 (SG), 39–40 (SG), and 41–42 (SG). The tract at residues 29 to 42 (SGSGSGSGSGSGSG) is 7 X 2 AA tandem repeats of S-G. 4 disulfide bridges follow: Cys-51–Cys-100, Cys-61–Cys-91, Cys-62–Cys-74, and Cys-101–Cys-112.

This sequence belongs to the cerato-ulmin hydrophobin family. As to quaternary structure, homotetramer. Further self-assembles to form highly ordered films at water-air interfaces through intermolecular interactions.

It localises to the secreted. The protein resides in the cell wall. Its function is as follows. Aerial growth, conidiation, and dispersal of filamentous fungi in the environment rely upon a capability of their secreting small amphipathic proteins called hydrophobins (HPBs) with low sequence identity. Class I can self-assemble into an outermost layer of rodlet bundles on aerial cell surfaces, conferring cellular hydrophobicity that supports fungal growth, development and dispersal; whereas Class II form highly ordered films at water-air interfaces through intermolecular interactions but contribute nothing to the rodlet structure. Cryparin is a class II hydrophobin that is the most abundant protein produced by this fungus when grown in liquid culture and that plays an essential role in the fitness of this important plant pathogen by facilitating the eruption of the fungal fruiting bodies through the bark of its host tree. This is Class II hydrophobin CRP from Cryphonectria parasitica (Chestnut blight fungus).